Reading from the N-terminus, the 396-residue chain is Ribosomal RNA large subunit methyltransferase I (396 aa).

Residues 2–81 (SVRLVLAKGR…ESIDIAFFSR (80 aa)) enclose the PUA domain.

It belongs to the methyltransferase superfamily. RlmI family.

It is found in the cytoplasm. The enzyme catalyses cytidine(1962) in 23S rRNA + S-adenosyl-L-methionine = 5-methylcytidine(1962) in 23S rRNA + S-adenosyl-L-homocysteine + H(+). Functionally, specifically methylates the cytosine at position 1962 (m5C1962) of 23S rRNA. This is Ribosomal RNA large subunit methyltransferase I from Shigella flexneri serotype 5b (strain 8401).